A 549-amino-acid chain; its full sequence is Hydroxylamine reductase (549 aa).

[4Fe-4S] cluster-binding residues include C5, C8, C17, and C23. Hybrid [4Fe-2O-2S] cluster is bound by residues H242, E266, C310, C402, C430, C455, E490, and K492. C402 is modified (cysteine persulfide).

It belongs to the HCP family. Requires [4Fe-4S] cluster as cofactor. The cofactor is hybrid [4Fe-2O-2S] cluster.

It is found in the cytoplasm. It carries out the reaction A + NH4(+) + H2O = hydroxylamine + AH2 + H(+). Functionally, catalyzes the reduction of hydroxylamine to form NH(3) and H(2)O. This chain is Hydroxylamine reductase, found in Clostridium novyi (strain NT).